We begin with the raw amino-acid sequence, 378 residues long: Glutamate 5-kinase 1 (378 aa).

Lys-13 serves as a coordination point for ATP. The substrate site is built by Ser-53, Asp-140, and Asn-152. 172-173 (SD) is an ATP binding site. The 78-residue stretch at 278–355 (AGRLTVDAGA…AEIETVLGYE (78 aa)) folds into the PUA domain.

It belongs to the glutamate 5-kinase family.

The protein localises to the cytoplasm. It carries out the reaction L-glutamate + ATP = L-glutamyl 5-phosphate + ADP. The protein operates within amino-acid biosynthesis; L-proline biosynthesis; L-glutamate 5-semialdehyde from L-glutamate: step 1/2. In terms of biological role, catalyzes the transfer of a phosphate group to glutamate to form L-glutamate 5-phosphate. This is Glutamate 5-kinase 1 from Mesorhizobium japonicum (strain LMG 29417 / CECT 9101 / MAFF 303099) (Mesorhizobium loti (strain MAFF 303099)).